The primary structure comprises 175 residues: Ribosome maturation factor RimM (175 aa).

The region spanning 96–175 (EGDYYWHDLI…TITVDWDAGF (80 aa)) is the PRC barrel domain.

Belongs to the RimM family. In terms of assembly, binds ribosomal protein uS19.

It localises to the cytoplasm. Its function is as follows. An accessory protein needed during the final step in the assembly of 30S ribosomal subunit, possibly for assembly of the head region. Essential for efficient processing of 16S rRNA. May be needed both before and after RbfA during the maturation of 16S rRNA. It has affinity for free ribosomal 30S subunits but not for 70S ribosomes. This Actinobacillus pleuropneumoniae serotype 5b (strain L20) protein is Ribosome maturation factor RimM.